The primary structure comprises 205 residues: MLGAKPHWLPGPLHSPGLPLVLVLLALGAGWAQEGSEPVLLEGECLVVCEPGRAAAGGPGGAALGEAPPGRVAFAAVRSHHHEPAGETGNGTSGAIYFDQVLVNEGGGFDRASGSFVAPVRGVYSFRFHVVKVYNRQTVQVSLMLNTWPVISAFANDPDVTREAATSSVLLPLDPGDRVSLRLRRGNLLGGWKYSSFSGFLIFPL.

Residues 1 to 32 (MLGAKPHWLPGPLHSPGLPLVLVLLALGAGWA) form the signal peptide. The C1q domain occupies 67-205 (APPGRVAFAA…SFSGFLIFPL (139 aa)). A necessary for interaction with CBLN3, and homotrimerization region spans residues 72–205 (VAFAAVRSHH…SFSGFLIFPL (134 aa)). The N-linked (GlcNAc...) asparagine glycan is linked to Asn-90.

As to quaternary structure, heterohexamer; disulfide-linked heterotrimers. Interacts with CBLN1. May also form oligomers with CBLN2 and CBLN4.

Its subcellular location is the endoplasmic reticulum. The protein resides in the golgi apparatus. It localises to the cis-Golgi network. The protein localises to the secreted. It is found in the synapse. Its function is as follows. May be involved in synaptic functions in the CNS. This Homo sapiens (Human) protein is Cerebellin-3 (CBLN3).